The primary structure comprises 91 residues: Small ribosomal subunit protein uS19 (91 aa).

This sequence belongs to the universal ribosomal protein uS19 family.

Its function is as follows. Protein S19 forms a complex with S13 that binds strongly to the 16S ribosomal RNA. This is Small ribosomal subunit protein uS19 from Chromohalobacter salexigens (strain ATCC BAA-138 / DSM 3043 / CIP 106854 / NCIMB 13768 / 1H11).